Here is a 1319-residue protein sequence, read N- to C-terminus: DNA-directed RNA polymerase subunit beta' (1319 aa).

Cysteine 60, cysteine 62, cysteine 75, and cysteine 78 together coordinate Zn(2+). Residues aspartate 535, aspartate 537, and aspartate 539 each coordinate Mg(2+). Residues cysteine 890, cysteine 971, cysteine 978, and cysteine 981 each contribute to the Zn(2+) site.

This sequence belongs to the RNA polymerase beta' chain family. The RNAP catalytic core consists of 2 alpha, 1 beta, 1 beta' and 1 omega subunit. When a sigma factor is associated with the core the holoenzyme is formed, which can initiate transcription. It depends on Mg(2+) as a cofactor. The cofactor is Zn(2+).

It carries out the reaction RNA(n) + a ribonucleoside 5'-triphosphate = RNA(n+1) + diphosphate. In terms of biological role, DNA-dependent RNA polymerase catalyzes the transcription of DNA into RNA using the four ribonucleoside triphosphates as substrates. The sequence is that of DNA-directed RNA polymerase subunit beta' from Mycobacteroides abscessus (strain ATCC 19977 / DSM 44196 / CCUG 20993 / CIP 104536 / JCM 13569 / NCTC 13031 / TMC 1543 / L948) (Mycobacterium abscessus).